The chain runs to 566 residues: Chondroitin sulfate proteoglycan 5 (566 aa).

The N-terminal stretch at 1 to 30 is a signal peptide; the sequence is MGRAGGGGPGRGPPPLLLFLGAALVLASGA. Topologically, residues 31 to 423 are extracellular; the sequence is VPAREAGSAV…SIITDFQVMC (393 aa). S38 carries an O-linked (Xyl...) (chondroitin sulfate) serine glycan. The interval 39-82 is disordered; the sequence is AVEAEELVKGSPAWEPPANDTREEAGPPAAGEDEASWTAPGGEL. A glycan (N-linked (GlcNAc...) asparagine) is linked at N57. Residue S117 is glycosylated (O-linked (Xyl...) (chondroitin sulfate) serine). Disordered regions lie at residues 143–202, 215–248, and 262–354; these read IPEA…LEPQ, GLDG…TPSW, and ESDF…ASSE. A glycan (O-linked (GalNAc...) serine) is linked at S165. The segment at 264–301 is interaction with TNC and TNR; the sequence is DFYPTTSFYDDLDEEEEEEEDDKDAVGGGDLEDENELL. Positions 273 to 286 are enriched in acidic residues; the sequence is DDLDEEEEEEEDDK. An EGF-like domain is found at 371–413; the sequence is RSVCDLFPSYCHNGGQCYLVENIGAFCRCNTQDYIWHKGMRCE. 3 disulfide bridges follow: C374-C387, C381-C397, and C399-C412. The helical transmembrane segment at 424 to 444 threads the bilayer; the sequence is VAVGSAALVLLLLFMMTVFFA. Residues 442 to 460 are interaction with GOPC; the sequence is FFAKKLYLLKTENTKLRRT. Over 445 to 566 the chain is Cytoplasmic; sequence KKLYLLKTEN…DVNCLQNNLT (122 aa). 4 positions are modified to phosphoserine: S467, S475, S483, and S543.

Binds TNR and probably TNC. Interacts with ERBB3 and GOPC. Interacts with MDK; this interaction is independent of the presence of chondroitin sulfate chains and promotes elongation of oligodendroglial precursor-like cells. Post-translationally, N-glycosylated. In terms of processing, O-glycosylated; contains chondroitin sulfate glycans. Part-time proteoglycan, expressed in part as a proteoglycan exhibiting chondroitin sulfate glycans and in part as a non-proteoglycan form. The relative amount of both forms depends on tissues and tissue maturation. Phosphorylated; in intracellular and extracellular parts. In terms of tissue distribution, detected in cerebrospinal fluid (at protein level). Detected in urine (at protein level). Expressed in brain (at protein level).

It is found in the cell membrane. It localises to the synaptic cell membrane. The protein resides in the endoplasmic reticulum membrane. The protein localises to the golgi apparatus membrane. Its subcellular location is the cell surface. It is found in the secreted. In terms of biological role, may function as a growth and differentiation factor involved in neuritogenesis. May induce ERBB3 activation. This Homo sapiens (Human) protein is Chondroitin sulfate proteoglycan 5 (CSPG5).